A 285-amino-acid polypeptide reads, in one-letter code: UPF0354 protein MW1686 (285 aa).

This sequence belongs to the UPF0354 family.

The polypeptide is UPF0354 protein MW1686 (Staphylococcus aureus (strain MW2)).